We begin with the raw amino-acid sequence, 326 residues long: MKAPVRVAVTGAAGQIGYSLLFRIAAGEMLGKDQPVTLQLLEIPQAQEALQGTVMELEDCAFPLVDGIIATDSAEEAFRDADYVLLVGAKPRGPGMERKDLLEANAAIFSAQGQALNAVAKRDVKVLAVGNPANTNALITQRNAPDLDPRNFTAMTRLDHNRALAQLSNKVGCHSTEIRGLAVWGNHSATQYPDISHCTIQGRPAADQVEHAWVKDTFIPTVQQRGAAIIKARGASSAASAASAAIDHMRDWALGTPEGEWTSMAVPSDGSYGIEAGLIYSFPVTCRGGDYKIVSGLSVDDFSRARMDQTAAELAEERDAVAHLLP.

NAD(+) is bound at residue 11–17 (GAAGQIG). Positions 92 and 98 each coordinate substrate. NAD(+)-binding positions include N105, Q112, and 129-131 (VGN). Positions 131 and 162 each coordinate substrate. Residue H187 is the Proton acceptor of the active site.

Belongs to the LDH/MDH superfamily. MDH type 2 family.

The enzyme catalyses (S)-malate + NAD(+) = oxaloacetate + NADH + H(+). In terms of biological role, catalyzes the reversible oxidation of malate to oxaloacetate. The sequence is that of Malate dehydrogenase from Halorhodospira halophila (strain DSM 244 / SL1) (Ectothiorhodospira halophila (strain DSM 244 / SL1)).